We begin with the raw amino-acid sequence, 93 residues long: Co-chaperonin GroES (93 aa).

The protein belongs to the GroES chaperonin family. Heptamer of 7 subunits arranged in a ring. Interacts with the chaperonin GroEL.

It localises to the cytoplasm. Together with the chaperonin GroEL, plays an essential role in assisting protein folding. The GroEL-GroES system forms a nano-cage that allows encapsulation of the non-native substrate proteins and provides a physical environment optimized to promote and accelerate protein folding. GroES binds to the apical surface of the GroEL ring, thereby capping the opening of the GroEL channel. This chain is Co-chaperonin GroES, found in Streptococcus gordonii (strain Challis / ATCC 35105 / BCRC 15272 / CH1 / DL1 / V288).